A 321-amino-acid polypeptide reads, in one-letter code: GDP-L-fucose synthase (321 aa).

Position 14 to 20 (14 to 20) interacts with NADP(+); sequence GGSGLVG. The active-site Proton donor/acceptor is tyrosine 143. NADP(+) contacts are provided by residues lysine 147, 170-173, and histidine 186; that span reads PTNV. Substrate contacts are provided by lysine 194, tryptophan 208, arginine 215, and aspartate 277.

The protein belongs to the NAD(P)-dependent epimerase/dehydratase family. Fucose synthase subfamily. Homodimer.

It catalyses the reaction GDP-beta-L-fucose + NADP(+) = GDP-4-dehydro-alpha-D-rhamnose + NADPH + H(+). The protein operates within nucleotide-sugar biosynthesis; GDP-L-fucose biosynthesis via de novo pathway; GDP-L-fucose from GDP-alpha-D-mannose: step 2/2. Functionally, catalyzes the two-step NADP-dependent conversion of GDP-4-dehydro-6-deoxy-D-mannose to GDP-fucose, involving an epimerase and a reductase reaction. The protein is GDP-L-fucose synthase of Mus musculus (Mouse).